The sequence spans 208 residues: ATP-dependent Clp protease proteolytic subunit (208 aa).

Catalysis depends on Ser106, which acts as the Nucleophile. His131 is an active-site residue.

Belongs to the peptidase S14 family. In terms of assembly, fourteen ClpP subunits assemble into 2 heptameric rings which stack back to back to give a disk-like structure with a central cavity, resembling the structure of eukaryotic proteasomes.

The protein localises to the cytoplasm. The enzyme catalyses Hydrolysis of proteins to small peptides in the presence of ATP and magnesium. alpha-casein is the usual test substrate. In the absence of ATP, only oligopeptides shorter than five residues are hydrolyzed (such as succinyl-Leu-Tyr-|-NHMec, and Leu-Tyr-Leu-|-Tyr-Trp, in which cleavage of the -Tyr-|-Leu- and -Tyr-|-Trp bonds also occurs).. In terms of biological role, cleaves peptides in various proteins in a process that requires ATP hydrolysis. Has a chymotrypsin-like activity. Plays a major role in the degradation of misfolded proteins. The sequence is that of ATP-dependent Clp protease proteolytic subunit from Caulobacter sp. (strain K31).